The primary structure comprises 54 residues: Ovomucoid (54 aa).

In terms of domain architecture, Kazal-like spans 4-54 (VDCSDYPKPVCSLEDMPLCGSDSKTYSNKCNFCNAVVDSNGTLTLSHFGKC). 3 disulfide bridges follow: C6/C36, C14/C33, and C22/C54. A glycan (N-linked (GlcNAc...) asparagine) is linked at N43.

It localises to the secreted. The protein is Ovomucoid of Vultur gryphus (Andean condor).